The primary structure comprises 132 residues: Small ribosomal subunit protein uS8 (132 aa).

Belongs to the universal ribosomal protein uS8 family. Part of the 30S ribosomal subunit. Contacts proteins S5 and S12.

Functionally, one of the primary rRNA binding proteins, it binds directly to 16S rRNA central domain where it helps coordinate assembly of the platform of the 30S subunit. The protein is Small ribosomal subunit protein uS8 of Staphylococcus saprophyticus subsp. saprophyticus (strain ATCC 15305 / DSM 20229 / NCIMB 8711 / NCTC 7292 / S-41).